Consider the following 155-residue polypeptide: Arginine repressor (155 aa).

This sequence belongs to the ArgR family.

It localises to the cytoplasm. It participates in amino-acid biosynthesis; L-arginine biosynthesis [regulation]. Functionally, regulates arginine biosynthesis genes. This is Arginine repressor from Histophilus somni (strain 129Pt) (Haemophilus somnus).